The primary structure comprises 710 residues: Dihydroxyacetone synthase (710 aa).

Residues His-78 and 128–130 (GPL) contribute to the thiamine diphosphate site. The Mg(2+) site is built by Asp-169, Asn-199, and Val-201. Residue Asn-199 coordinates thiamine diphosphate. Thiamine diphosphate-binding residues include His-275, Glu-433, and Phe-461. Residue Glu-433 is the Proton donor of the active site. Positions 708 to 710 (NKL) match the Microbody targeting signal motif.

Belongs to the transketolase family. Requires Mg(2+) as cofactor. The cofactor is Ca(2+). It depends on Mn(2+) as a cofactor. Co(2+) is required as a cofactor. Thiamine diphosphate serves as cofactor.

The protein resides in the peroxisome. The enzyme catalyses D-xylulose 5-phosphate + formaldehyde = dihydroxyacetone + D-glyceraldehyde 3-phosphate. Functionally, this is the major methanol assimilatory enzyme from the methylotrophic Hansenula polymorpha. This Pichia angusta (Yeast) protein is Dihydroxyacetone synthase (DAS).